A 596-amino-acid chain; its full sequence is Actin-histidine N-methyltransferase (596 aa).

Residues Arg75, 104–106 (EGY), Arg254, 275–279 (DMCNH), and 325–327 (NGF) each bind S-adenosyl-L-methionine. Positions 94–314 (DGFEISNFAD…EGEQIYIFYG (221 aa)) constitute an SET domain. Residues 556-596 (QCKDLNGTQEDPPGGGAVVKEIEKHDPSAKRTEGEPKDAGK) are disordered. A compositionally biased stretch (basic and acidic residues) spans 575–596 (KEIEKHDPSAKRTEGEPKDAGK).

This sequence belongs to the class V-like SAM-binding methyltransferase superfamily. SETD3 actin-histidine methyltransferase family.

It is found in the cytoplasm. It catalyses the reaction L-histidyl-[protein] + S-adenosyl-L-methionine = N(tele)-methyl-L-histidyl-[protein] + S-adenosyl-L-homocysteine + H(+). Its function is as follows. Protein-histidine N-methyltransferase that specifically mediates 3-methylhistidine (tele-methylhistidine) methylation of actin at 'His-73'. Does not have protein-lysine N-methyltransferase activity and probably only catalyzes histidine methylation of actin. This is Actin-histidine N-methyltransferase from Danio rerio (Zebrafish).